The following is a 301-amino-acid chain: uncharacterized protein (301 aa).

3 residues coordinate a divalent metal cation: glutamate 146, glutamate 148, and aspartate 177.

The protein belongs to the FAH family.

This is an uncharacterized protein from Staphylococcus haemolyticus (strain JCSC1435).